A 450-amino-acid polypeptide reads, in one-letter code: Probable ECA polymerase (450 aa).

11 helical membrane passes run 6–26 (FSGLFVVWLLCTLFIATLTWF), 37–57 (VFFSLLFLLTFFFGFPLTSVL), 63–83 (VGVAPPEILLQALLSAGCFYA), 118–138 (VILMGVALVSVGIFFMHNGFL), 155–175 (GVALKRFFYFFIPAMLVVYFL), 181–201 (AWLFFLVSTVAFGLLTYMIVG), 207–227 (IIIAFAIFLFIGIIRGWISLW), 228–248 (MLAAAGVLGIVGMFWLALKRY), 341–361 (LVVMGGALFIPLGAIVVGLII), 378–398 (YKAAILHSFCFGAIFNMIVLA), and 410–430 (VFFIVVFGACLMIAKLLYWLF).

Belongs to the WzyE family. In terms of assembly, probably part of a complex composed of WzxE, WzyE and WzzE.

It is found in the cell inner membrane. It participates in bacterial outer membrane biogenesis; enterobacterial common antigen biosynthesis. Its function is as follows. Probably involved in the polymerization of enterobacterial common antigen (ECA) trisaccharide repeat units. This chain is Probable ECA polymerase, found in Escherichia coli O17:K52:H18 (strain UMN026 / ExPEC).